Here is a 212-residue protein sequence, read N- to C-terminus: Ion-translocating oxidoreductase complex subunit G (212 aa).

Residues 9-29 (GLLLALFALLCTGLVAVVNQQ) form a helical membrane-spanning segment. Thr-176 carries the FMN phosphoryl threonine modification.

This sequence belongs to the RnfG family. In terms of assembly, the complex is composed of six subunits: RnfA, RnfB, RnfC, RnfD, RnfE and RnfG. It depends on FMN as a cofactor.

It localises to the cell inner membrane. Part of a membrane-bound complex that couples electron transfer with translocation of ions across the membrane. The chain is Ion-translocating oxidoreductase complex subunit G from Shewanella oneidensis (strain ATCC 700550 / JCM 31522 / CIP 106686 / LMG 19005 / NCIMB 14063 / MR-1).